Reading from the N-terminus, the 54-residue chain is Ovomucoid (54 aa).

Positions 4–54 (VDCSDYPKPACRMEYMPLCGSDNKTYGNKCNFCNAVVDSNGTLTLSHFGKC) constitute a Kazal-like domain. 3 cysteine pairs are disulfide-bonded: Cys-6–Cys-36, Cys-14–Cys-33, and Cys-22–Cys-54. A glycan (N-linked (GlcNAc...) asparagine) is linked at Asn-43.

It is found in the secreted. The sequence is that of Ovomucoid from Cereopsis novaehollandiae (Cape Barren goose).